The chain runs to 156 residues: Mediator of RNA polymerase II transcription subunit 28 (156 aa).

Residues 1 to 38 (MDYQQKPPQSSDPSPSPPDRPPGIRSPETPSNNQNNDI) are disordered. The stretch at 104–156 (PSRAESLKKDIAVMEEELKTKDELIKKHMRLFQESQKLVKEQIEKHRDELEKV) forms a coiled coil.

The protein belongs to the Mediator complex subunit 28 family. As to quaternary structure, dimers. Component of the Mediator complex. Interacts with GEBPL.

Its subcellular location is the nucleus. In terms of biological role, component of the Mediator complex, a coactivator involved in the regulated transcription of nearly all RNA polymerase II-dependent genes. Mediator functions as a bridge to convey information from gene-specific regulatory proteins to the basal RNA polymerase II transcription machinery. The Mediator complex, having a compact conformation in its free form, is recruited to promoters by direct interactions with regulatory proteins and serves for the assembly of a functional pre-initiation complex with RNA polymerase II and the general transcription factors. This Arabidopsis thaliana (Mouse-ear cress) protein is Mediator of RNA polymerase II transcription subunit 28.